Reading from the N-terminus, the 260-residue chain is Adenosylcobinamide-GDP ribazoletransferase (260 aa).

Helical transmembrane passes span 42–62, 64–84, 117–137, 144–164, 192–212, 214–234, and 240–260; these read PLAGGILGLLAGVALLIANAI, LPPLAAALIAIGALAAMTGAL, FAALTLVIWTGVKASLLMAII, YALLALIGTEAASRAGMLAFW, GLGLALLAIGFLPSGGMVALI, ALVLMTVVLFGFARLCMAKIG, and TLGAAQQIGSLAALIGLVMAL.

The protein belongs to the CobS family. Mg(2+) is required as a cofactor.

It is found in the cell inner membrane. It catalyses the reaction alpha-ribazole + adenosylcob(III)inamide-GDP = adenosylcob(III)alamin + GMP + H(+). The enzyme catalyses alpha-ribazole 5'-phosphate + adenosylcob(III)inamide-GDP = adenosylcob(III)alamin 5'-phosphate + GMP + H(+). Its pathway is cofactor biosynthesis; adenosylcobalamin biosynthesis; adenosylcobalamin from cob(II)yrinate a,c-diamide: step 7/7. Functionally, joins adenosylcobinamide-GDP and alpha-ribazole to generate adenosylcobalamin (Ado-cobalamin). Also synthesizes adenosylcobalamin 5'-phosphate from adenosylcobinamide-GDP and alpha-ribazole 5'-phosphate. The polypeptide is Adenosylcobinamide-GDP ribazoletransferase (Brucella melitensis biotype 1 (strain ATCC 23456 / CCUG 17765 / NCTC 10094 / 16M)).